A 199-amino-acid chain; its full sequence is Holliday junction branch migration complex subunit RuvA (199 aa).

Positions 1 to 63 (MYEYLTGLVT…EDNISLFGFT (63 aa)) are domain I. A domain II region spans residues 64 to 142 (DQNEKNLFMQ…NESSSSLFAT (79 aa)). Positions 143 to 149 (TQLTVDA) are flexible linker. The tract at residues 150–199 (TVNRELKDALEALAALGYKERDIKKVQKALMKEEQMATDEYLRQALRLLN) is domain III.

Belongs to the RuvA family. As to quaternary structure, homotetramer. Forms an RuvA(8)-RuvB(12)-Holliday junction (HJ) complex. HJ DNA is sandwiched between 2 RuvA tetramers; dsDNA enters through RuvA and exits via RuvB. An RuvB hexamer assembles on each DNA strand where it exits the tetramer. Each RuvB hexamer is contacted by two RuvA subunits (via domain III) on 2 adjacent RuvB subunits; this complex drives branch migration. In the full resolvosome a probable DNA-RuvA(4)-RuvB(12)-RuvC(2) complex forms which resolves the HJ.

The protein localises to the cytoplasm. In terms of biological role, the RuvA-RuvB-RuvC complex processes Holliday junction (HJ) DNA during genetic recombination and DNA repair, while the RuvA-RuvB complex plays an important role in the rescue of blocked DNA replication forks via replication fork reversal (RFR). RuvA specifically binds to HJ cruciform DNA, conferring on it an open structure. The RuvB hexamer acts as an ATP-dependent pump, pulling dsDNA into and through the RuvAB complex. HJ branch migration allows RuvC to scan DNA until it finds its consensus sequence, where it cleaves and resolves the cruciform DNA. This Limosilactobacillus reuteri subsp. reuteri (strain JCM 1112) (Lactobacillus reuteri) protein is Holliday junction branch migration complex subunit RuvA.